Consider the following 189-residue polypeptide: dCTP deaminase (189 aa).

Residues 112–117 (KSTYAR), 136–138 (TLE), Q157, Y171, and Q181 each bind dCTP. Catalysis depends on E138, which acts as the Proton donor/acceptor.

Belongs to the dCTP deaminase family. In terms of assembly, homotrimer.

It carries out the reaction dCTP + H2O + H(+) = dUTP + NH4(+). It participates in pyrimidine metabolism; dUMP biosynthesis; dUMP from dCTP (dUTP route): step 1/2. Its function is as follows. Catalyzes the deamination of dCTP to dUTP. The chain is dCTP deaminase from Leptothrix cholodnii (strain ATCC 51168 / LMG 8142 / SP-6) (Leptothrix discophora (strain SP-6)).